We begin with the raw amino-acid sequence, 264 residues long: Myozenin-2 (264 aa).

Arginine 53 bears the Omega-N-methylarginine mark. The disordered stretch occupies residues glutamate 98–isoleucine 134. Serine 101 is modified (phosphoserine). Residues phenylalanine 106 to proline 120 show a composition bias toward pro residues. Residues threonine 107 and threonine 111 each carry the phosphothreonine modification. Phosphoserine is present on serine 116.

It belongs to the myozenin family. As to quaternary structure, interacts via its C-terminus with spectrin repeats 3 and 4 of ACTN2. Interacts with ACTN1, LDB3, MYOT and PPP3CA.

It localises to the cytoplasm. It is found in the myofibril. The protein resides in the sarcomere. The protein localises to the z line. In terms of biological role, myozenins may serve as intracellular binding proteins involved in linking Z line proteins such as alpha-actinin, gamma-filamin, TCAP/telethonin, LDB3/ZASP and localizing calcineurin signaling to the sarcomere. Plays an important role in the modulation of calcineurin signaling. May play a role in myofibrillogenesis. This is Myozenin-2 (MYOZ2) from Bos taurus (Bovine).